The primary structure comprises 89 residues: MALSVEEKAQIVTDYQQAVGDTGSPEVQVALLTANINKLQGHFKANGKDHHSRRGLIRMVNQRRKLLDYLKGKDLSRYSTLIGRLGLRR.

It belongs to the universal ribosomal protein uS15 family. Part of the 30S ribosomal subunit. Forms a bridge to the 50S subunit in the 70S ribosome, contacting the 23S rRNA.

Functionally, one of the primary rRNA binding proteins, it binds directly to 16S rRNA where it helps nucleate assembly of the platform of the 30S subunit by binding and bridging several RNA helices of the 16S rRNA. Its function is as follows. Forms an intersubunit bridge (bridge B4) with the 23S rRNA of the 50S subunit in the ribosome. The sequence is that of Small ribosomal subunit protein uS15 from Pseudomonas fluorescens (strain ATCC BAA-477 / NRRL B-23932 / Pf-5).